The sequence spans 83 residues: RNA-binding protein Hfq (83 aa).

Residues 9-69 (DQLLNTARKE…ISTIIPAKPI (61 aa)) enclose the Sm domain.

This sequence belongs to the Hfq family. In terms of assembly, homohexamer.

RNA chaperone that binds small regulatory RNA (sRNAs) and mRNAs to facilitate mRNA translational regulation in response to envelope stress, environmental stress and changes in metabolite concentrations. Also binds with high specificity to tRNAs. This is RNA-binding protein Hfq from Leptospira biflexa serovar Patoc (strain Patoc 1 / Ames).